Reading from the N-terminus, the 77-residue chain is Fungal protease inhibitor F (77 aa).

An N-terminal signal peptide occupies residues 1–22 (MASKNLFVLFFIFALFAANIAA). 4 cysteine pairs are disulfide-bonded: Cys25–Cys57, Cys36–Cys49, Cys40–Cys77, and Cys59–Cys71.

This sequence belongs to the protease inhibitor I40 family. Hemolymph.

It localises to the secreted. In terms of biological role, highly specific for fungal protease and subtilisin. The protein is Fungal protease inhibitor F of Bombyx mori (Silk moth).